Consider the following 97-residue polypeptide: Large ribosomal subunit protein uL23 (97 aa).

It belongs to the universal ribosomal protein uL23 family. Part of the 50S ribosomal subunit. Contacts protein L29, and trigger factor when it is bound to the ribosome.

Its function is as follows. One of the early assembly proteins it binds 23S rRNA. One of the proteins that surrounds the polypeptide exit tunnel on the outside of the ribosome. Forms the main docking site for trigger factor binding to the ribosome. This Mesorhizobium japonicum (strain LMG 29417 / CECT 9101 / MAFF 303099) (Mesorhizobium loti (strain MAFF 303099)) protein is Large ribosomal subunit protein uL23.